Reading from the N-terminus, the 234-residue chain is MFILWYSASSTFGKDSDIVMGVRAQQKEKTRRSLVEAAFSQLSAERSFASLSLREVAREAGIAPTSFYRHFRDVDELGLTMVDESGLMLRQLMRQARQRIAKGGSVIRTSVSTFMEFIGNNPNAFRLLLRERSGTSAAFRAAVAREIQHFIAELADYLELENHMPRAFTEAQAEAMVTIVFSAGAEALDVGVEQRRQLEERLVLQLRMISKGAYYWYRREQEKTAIIPGNVKDE.

An HTH tetR-type domain is found at 29 to 89 (KTRRSLVEAA…TMVDESGLML (61 aa)). The H-T-H motif DNA-binding region spans 52–71 (SLREVAREAGIAPTSFYRHF).

Homodimer.

The protein resides in the cytoplasm. Its activity is regulated as follows. Has been suggested to require either an unsaturated acyl carrier protein or unsaturated acyl-CoA (but not their saturated equivalents) for DNA-binding. Another group suggests that unsaturated thioesters are not essential but act instead to enhance DNA-binding. In terms of biological role, binds the promoter region of at least fabA and fabB, but probably not yqfA. Represses the transcription of fabA and fabB, involved in unsaturated fatty acid (UFA) biosynthesis. By controlling UFA production, FabR directly influences the physical properties of the membrane bilayer. This Escherichia coli (strain K12) protein is HTH-type transcriptional repressor FabR.